Here is a 754-residue protein sequence, read N- to C-terminus: ATP-dependent RNA helicase drs1 (754 aa).

The tract at residues 121–237 is disordered; the sequence is SKTESNRASN…SDSEEDEEEI (117 aa). Composition is skewed to acidic residues over residues 155–175 and 186–205; these read SEEE…EDLA and ENED…DDIT. The short motif at 259 to 287 is the Q motif element; sequence SSFQSMNLSRPILKGLSNLGFEVPTQIQD. The 175-residue stretch at 290-464 folds into the Helicase ATP-binding domain; that stretch reads IPLALLGKDI…RLSLNRPVRV (175 aa). 303–310 is a binding site for ATP; that stretch reads AVTGSGKT. The DEAD box motif lies at 412–415; it reads DEAD. In terms of domain architecture, Helicase C-terminal spans 475 to 641; sequence LLTQEFVRVR…NRNLDFNKVE (167 aa). Positions 655–728 form a coiled coil; sequence QKVLDEEKQE…RKKQMEKEEV (74 aa). Positions 692 to 754 are disordered; the sequence is ARTWFQSEKD…STKKSKSKRK (63 aa). Basic and acidic residues-rich tracts occupy residues 698–715 and 723–741; these read SEKD…DKKS and MEKE…DRLS. A compositionally biased stretch (basic residues) spans 742–754; sequence NKKSTKKSKSKRK.

This sequence belongs to the DEAD box helicase family. DDX27/DRS1 subfamily. As to quaternary structure, associates with pre-ribosomal particles.

The protein resides in the nucleus. It is found in the nucleolus. It catalyses the reaction ATP + H2O = ADP + phosphate + H(+). In terms of biological role, ATP-binding RNA helicase involved in ribosome assembly. This is ATP-dependent RNA helicase drs1 (drs1) from Schizosaccharomyces pombe (strain 972 / ATCC 24843) (Fission yeast).